The chain runs to 120 residues: MDEPRPEAANVDSQQNSQCCLTRSEVYALVREVINKRKHHNLVTNVCDHVFDDGFEEQLKYIRANIDKALITVGGEHKHCKRLAAHIKKINKIFKLNKSLETEYKQSIDRYGSNRFNRNN.

Belongs to the baculoviridae LEF-11 family.

Functionally, involved in late/very late gene activation. The polypeptide is Late expression factor 11 (LEF-11) (Mamestra configurata nucleopolyhedrovirus (MacoNPV)).